The following is a 432-amino-acid chain: 3-phosphoshikimate 1-carboxyvinyltransferase (432 aa).

Residues Lys21, Ser22, and Arg26 each contribute to the 3-phosphoshikimate site. A phosphoenolpyruvate-binding site is contributed by Lys21. Residues Gly94 and Arg122 each contribute to the phosphoenolpyruvate site. 3-phosphoshikimate is bound by residues Ser168, Gln170, Asp317, and Lys344. Residue Gln170 coordinates phosphoenolpyruvate. Asp317 serves as the catalytic Proton acceptor. Phosphoenolpyruvate contacts are provided by Arg348 and Arg391.

Belongs to the EPSP synthase family. In terms of assembly, monomer.

The protein resides in the cytoplasm. It catalyses the reaction 3-phosphoshikimate + phosphoenolpyruvate = 5-O-(1-carboxyvinyl)-3-phosphoshikimate + phosphate. It functions in the pathway metabolic intermediate biosynthesis; chorismate biosynthesis; chorismate from D-erythrose 4-phosphate and phosphoenolpyruvate: step 6/7. Its function is as follows. Catalyzes the transfer of the enolpyruvyl moiety of phosphoenolpyruvate (PEP) to the 5-hydroxyl of shikimate-3-phosphate (S3P) to produce enolpyruvyl shikimate-3-phosphate and inorganic phosphate. The polypeptide is 3-phosphoshikimate 1-carboxyvinyltransferase (Petrotoga mobilis (strain DSM 10674 / SJ95)).